A 124-amino-acid chain; its full sequence is MEQLVYIALLGALGCLCRYFLSGLVYQVFGTSFPYGTLAVNLIGAFLIGLVMEFSVRSAAIPPTLRFAITIGFLGGLTTFSTFSFETFRLLEDGALLIAFVNVLVSVVACLTCTWIGIMVARAL.

4 helical membrane passes run 5 to 25 (VYIALLGALGCLCRYFLSGLV), 32 to 52 (SFPYGTLAVNLIGAFLIGLVM), 67 to 87 (FAITIGFLGGLTTFSTFSFET), and 96 to 116 (LLIAFVNVLVSVVACLTCTWI). Na(+)-binding residues include glycine 75 and threonine 78.

This sequence belongs to the fluoride channel Fluc/FEX (TC 1.A.43) family.

The protein resides in the cell inner membrane. The enzyme catalyses fluoride(in) = fluoride(out). With respect to regulation, na(+) is not transported, but it plays an essential structural role and its presence is essential for fluoride channel function. In terms of biological role, fluoride-specific ion channel. Important for reducing fluoride concentration in the cell, thus reducing its toxicity. In Geobacter sp. (strain M21), this protein is Fluoride-specific ion channel FluC.